The primary structure comprises 436 residues: Ribosome biogenesis protein WDR12 homolog (436 aa).

Residues 13–97 (VRVRFLTKLP…ERVLELEYVK (85 aa)) form a ubiquitin-like (UBL) domain region. 7 WD repeats span residues 109–147 (PHDD…THIL), 149–193 (GHSD…SVPK), 203–242 (GHTS…EDGD), 273–311 (GHTQ…ETWN), 313–353 (VSGK…TLAP), 359–399 (SHKS…PLAS), and 402–436 (SHKD…IEIV). The interval 240–262 (DGDTVSVKKRRTNSDSSGPEESL) is disordered.

The protein belongs to the WD repeat WDR12/YTM1 family.

It is found in the nucleus. The protein localises to the nucleolus. It localises to the nucleoplasm. Its function is as follows. Required for maturation of ribosomal RNAs and formation of the large ribosomal subunit. This is Ribosome biogenesis protein WDR12 homolog from Oryza sativa subsp. japonica (Rice).